A 470-amino-acid chain; its full sequence is Calcium/manganese antiporter SLC30A10 (470 aa).

Over 1–10 (MGRYSGKTCR) the chain is Cytoplasmic. The helical transmembrane segment at 11–31 (LLFMLVLTAAFFVAELVSGYL) threads the bilayer. The Extracellular portion of the chain corresponds to 32–34 (GNS). Residues 35–55 (IALLSDSFNMLSDLISLCVGL) form a helical membrane-spanning segment. The Cytoplasmic segment spans residues 56–81 (GSGYIARRGPRGSSATYGYVRAEVVG). The chain crosses the membrane as a helical span at residues 82 to 102 (ALSNAVFLTALCFTIFVEAVL). Over 103–113 (RLARPERIDDP) the chain is Extracellular. The helical transmembrane segment at 114-134 (ELVLIVGALGLAVNVVGLLIF) threads the bilayer. Over 135-233 (QDCGACFSRC…KSEALNIRGV (99 aa)) the chain is Cytoplasmic. Positions 146-223 (RGRRTRPSQQ…EPEETTKKEK (78 aa)) are disordered. The segment covering 171-184 (AATATAPGSGTAVT) has biased composition (low complexity). A helical transmembrane segment spans residues 234–254 (LLHVMGDALGSVVVVITAIIF). Residues 255 to 270 (YVQPLRREDPCNWQCY) are Extracellular-facing. The chain crosses the membrane as a helical span at residues 271–291 (IDPSLTVVMVIIILSSAFPLI). At 292-470 (KETAVILLQM…RQHYENSTHF (179 aa)) the chain is on the cytoplasmic side. Residues 300-470 (QMVPKGVNME…RQHYENSTHF (171 aa)) form a required for plasma membrane localization region. Residues 451-470 (QGQTLSKTQERQHYENSTHF) form a disordered region. A compositionally biased stretch (basic and acidic residues) spans 458 to 470 (TQERQHYENSTHF).

It belongs to the cation diffusion facilitator (CDF) transporter (TC 2.A.4) family. SLC30A subfamily. As to quaternary structure, forms homodimers. Forms heterodimers and high-molecular weight oligomers with SLC30A3, SLC30A2 and SLC30A4; heterodimerization is mediated by covalent-bound tyrosine residues, occurs probably in a tissue-specific manner and could mediate the intracellular zinc transport activity into early endosomes and recycling endosomes. In terms of tissue distribution, specifically expressed in fetal liver and fetal brain.

It is found in the cell membrane. It localises to the golgi apparatus membrane. The protein resides in the recycling endosome membrane. The protein localises to the early endosome membrane. The catalysed reaction is Mn(2+)(out) + Ca(2+)(in) = Mn(2+)(in) + Ca(2+)(out). It catalyses the reaction Zn(2+)(in) = Zn(2+)(out). Its function is as follows. Calcium:manganese antiporter of the plasma membrane mediating the efflux of intracellular manganese coupled to an active extracellular calcium exchange. Required for intracellular manganese homeostasis, an essential cation for the function of several enzymes, including some crucially important for the metabolism of neurotransmitters and other neuronal metabolic pathways. Manganese can also be cytotoxic and induce oxidative stress, mitochondrial dysfunction and apoptosis. Could also have an intracellular zinc ion transporter activity, directly regulating intracellular zinc ion homeostasis and more indirectly various signaling pathway and biological processes. The protein is Calcium/manganese antiporter SLC30A10 of Mus musculus (Mouse).